The following is a 606-amino-acid chain: Probable methyltransferase PMT5 (606 aa).

Residues M1–R20 lie on the Cytoplasmic side of the membrane. The helical; Signal-anchor for type II membrane protein transmembrane segment at G21–S41 threads the bilayer. Topologically, residues N42 to K606 are lumenal. N101 and N409 each carry an N-linked (GlcNAc...) asparagine glycan.

The protein belongs to the methyltransferase superfamily.

It localises to the endoplasmic reticulum membrane. This is Probable methyltransferase PMT5 from Arabidopsis thaliana (Mouse-ear cress).